The chain runs to 313 residues: Proline iminopeptidase (313 aa).

Residues 35–298 (KPVVILHGGP…TPGAGHSAFE (264 aa)) enclose the AB hydrolase-1 domain. Serine 110 (nucleophile) is an active-site residue. Aspartate 266 is an active-site residue. The active-site Proton donor is histidine 294.

The protein belongs to the peptidase S33 family.

It localises to the cytoplasm. The enzyme catalyses Release of N-terminal proline from a peptide.. Functionally, specifically catalyzes the removal of N-terminal proline residues from peptides. This chain is Proline iminopeptidase (pip), found in Xylella fastidiosa (strain Temecula1 / ATCC 700964).